Consider the following 140-residue polypeptide: MFRTISRKNMSQKLSFLLLVFGLIWGLMLLHYTLQQPRRQSSVKLREQILDLSKRYVKALAEESRSTADVDSGASMAGYADLKRTIAVLLDDILQRLVKLESKVDYIVVNGSATNTTNGTNGNLVPVTTNKRTSVSGSVR.

An N-terminal signal peptide occupies residues 1–35 (MFRTISRKNMSQKLSFLLLVFGLIWGLMLLHYTLQ). Asn110 carries an N-linked (GlcNAc...) asparagine glycan. Residues 118–130 (NGTNGNLVPVTTN) are compositionally biased toward low complexity. The disordered stretch occupies residues 118 to 140 (NGTNGNLVPVTTNKRTSVSGSVR). Over residues 131–140 (KRTSVSGSVR) the composition is skewed to polar residues.

The protein resides in the secreted. The chain is Coiled-coil domain-containing protein 126 (Ccdc126) from Mus musculus (Mouse).